The primary structure comprises 415 residues: Gamma-glutamyl phosphate reductase (415 aa).

This sequence belongs to the gamma-glutamyl phosphate reductase family.

Its subcellular location is the cytoplasm. It carries out the reaction L-glutamate 5-semialdehyde + phosphate + NADP(+) = L-glutamyl 5-phosphate + NADPH + H(+). It functions in the pathway amino-acid biosynthesis; L-proline biosynthesis; L-glutamate 5-semialdehyde from L-glutamate: step 2/2. Its function is as follows. Catalyzes the NADPH-dependent reduction of L-glutamate 5-phosphate into L-glutamate 5-semialdehyde and phosphate. The product spontaneously undergoes cyclization to form 1-pyrroline-5-carboxylate. The chain is Gamma-glutamyl phosphate reductase from Lachnospira eligens (strain ATCC 27750 / DSM 3376 / VPI C15-48 / C15-B4) (Eubacterium eligens).